The following is an 834-amino-acid chain: WW domain-containing adapter protein with coiled-coil homolog (834 aa).

3 disordered regions span residues 1–247 (MVMH…WSEH), 268–411 (KPKE…SVAT), and 430–504 (VTGA…GAKG). A compositionally biased stretch (low complexity) spans 22–31 (HTSYQSSKYS). Residues 33-50 (SKRDYERDRSSNYRDRDL) show a composition bias toward basic and acidic residues. The segment covering 53 to 77 (GAGGGGGGGSAGGGGGGSGNGGGPL) has biased composition (gly residues). Residues 96-108 (RSHDLRDRSDHRG) show a composition bias toward basic and acidic residues. The segment covering 109–119 (GGGGNGRGGSG) has biased composition (gly residues). Composition is skewed to basic and acidic residues over residues 127-168 (KMRD…DRRG), 181-246 (SSRE…DWSE), and 268-303 (KPKE…DRFS). The 28-residue stretch at 244–271 (WSEHVSSSGKMYYYNCKTEISQWEKPKE) folds into the WW domain. Polar residues-rich tracts occupy residues 304 to 314 (RSTYKHSNSSR) and 350 to 363 (GDST…YSLS). Over residues 369–384 (HGGGPGGGGPGGGGGS) the composition is skewed to gly residues. Composition is skewed to low complexity over residues 402–411 (TANSSASVAT) and 431–466 (TGAT…LRNS). Polar residues predominate over residues 472–496 (GSTSGTTVPTLGSQDPHQHHLNSNA).

As to expression, expressed in adult head and thorax and in larval central nervous system and fat body.

Its subcellular location is the nucleus. The protein resides in the lysosome. In terms of biological role, acts as a linker between gene transcription and histone H2B monoubiquitination at 'Lys-118'. Regulates the cell-cycle checkpoint activation in response to DNA damage. Positive regulator of amino acid starvation-induced autophagy. Also acts as a negative regulator of basal autophagy. Positively regulates mTor activity. Promotes, in an energy-dependent manner, the assembly of the TTT complex and the RUVBL complex composed of pont and rept into the TTT-RUVBL complex. This leads to dimerization of the mTORC1 complex and its subsequent activation. May negatively regulate the ubiquitin proteasome pathway. Required for habituation, a form of non-associative learning. The protein is WW domain-containing adapter protein with coiled-coil homolog of Drosophila melanogaster (Fruit fly).